The primary structure comprises 407 residues: MLESLQPESELLHDEPDPGEKVYECDECRKTFSLEQHFVEHKKTHGGEKSPECTGCGEEFSKASSLTRHLRSRSRRESYKCGNCGRTFSQRGNFLSHQKQHAEERPSESKKTPVPMTTIVRNQRNAGNKPYACKECGKAFNGKSYLKEHEKIHTGEKPFECNQCGRAFSQKQYLIKHQNVHSGKKPFKCNECGKAFSQKENLIIHQRIHTGEKPYECKGCGKAFIQKSSLIRHQRSHTGEKPYTCKECGKAFSGKSNLTEHEKIHIGEKPYKCNECGTIFRQKQYLIKHHNIHTGEKPYECNKCGKAFSRITSLIVHVRIHTGDKPYECKVCGKAFCQSSSLTVHMRSHTGEKPYGCNECGKAFSQFSTLALHMRIHTGEKPYQCSECGKAFSQKSHHIRHQRIHIH.

A disordered region spans residues 1–21 (MLESLQPESELLHDEPDPGEK). Residues 10 to 21 (ELLHDEPDPGEK) show a composition bias toward basic and acidic residues. The segment at 23 to 45 (YECDECRKTFSLEQHFVEHKKTH) adopts a C2H2-type 1 zinc-finger fold. The C2H2-type 2; degenerate zinc finger occupies 51–73 (PECTGCGEEFSKASSLTRHLRSR). 11 consecutive C2H2-type zinc fingers follow at residues 79–101 (YKCGNCGRTFSQRGNFLSHQKQH), 131–153 (YACKECGKAFNGKSYLKEHEKIH), 159–181 (FECNQCGRAFSQKQYLIKHQNVH), 187–209 (FKCNECGKAFSQKENLIIHQRIH), 215–237 (YECKGCGKAFIQKSSLIRHQRSH), 243–265 (YTCKECGKAFSGKSNLTEHEKIH), 271–293 (YKCNECGTIFRQKQYLIKHHNIH), 299–321 (YECNKCGKAFSRITSLIVHVRIH), 327–349 (YECKVCGKAFCQSSSLTVHMRSH), 355–377 (YGCNECGKAFSQFSTLALHMRIH), and 383–405 (YQCSECGKAFSQKSHHIRHQRIH).

It belongs to the krueppel C2H2-type zinc-finger protein family. In terms of assembly, binds DNA. Interacts with GATA4. In terms of tissue distribution, expressed in both embryonic, fetal and adult heart. Also expressed in lung, skeletal muscle and adrenal glands.

The protein resides in the nucleus. Transcription factor that acts as a cardiac regulator and an effector of alpha1-adrenergic signaling. Binds to PE response elements (PERE) present in the promoter of genes such as ANF/NPPA and acts as a direct transcriptional activator of NPPA. Also acts as a cofactor with GATA4, a key cardiac regulator. This Rattus norvegicus (Rat) protein is Zinc finger protein 260 (Znf260).